A 156-amino-acid chain; its full sequence is Putative HTH-type transcriptional regulator YffB (156 aa).

The region spanning 2-137 (KLSSGWEQSV…SNVSLAQVAD (136 aa)) is the HTH rrf2-type domain.

The sequence is that of Putative HTH-type transcriptional regulator YffB (yffB) from Lactococcus lactis subsp. lactis (strain IL1403) (Streptococcus lactis).